The sequence spans 353 residues: Putative transcription factor MTF1 (353 aa).

Composition is skewed to polar residues over residues 11 to 26 (VTRS…TSPA) and 36 to 58 (EPSN…QQGN). Disordered regions lie at residues 11 to 96 (VTRS…ALPC) and 129 to 174 (FTTT…TTNP). 2 stretches are compositionally biased toward low complexity: residues 59-95 (TEAS…PALP) and 133-145 (NSSP…SPSS). The span at 148 to 164 (SHTRKNSKYTVRHHRTR) shows a compositional bias: basic residues. Residues 165 to 174 (QSSFNGTTNP) show a composition bias toward polar residues.

It localises to the nucleus. Its function is as follows. May be involved in transcriptional activation. The protein is Putative transcription factor MTF1 (MTF1) of Mucor circinelloides f. lusitanicus (Mucor racemosus var. lusitanicus).